A 196-amino-acid polypeptide reads, in one-letter code: Glycerol-3-phosphate acyltransferase (196 aa).

Transmembrane regions (helical) follow at residues 1 to 21 (MIIL…GYLT), 53 to 73 (AITA…GSLL), 78 to 98 (GALV…FLKF), 112 to 132 (IMTS…VMLI), and 152 to 172 (LLFG…VMIF).

It belongs to the PlsY family. As to quaternary structure, probably interacts with PlsX.

Its subcellular location is the cell membrane. The catalysed reaction is an acyl phosphate + sn-glycerol 3-phosphate = a 1-acyl-sn-glycero-3-phosphate + phosphate. The protein operates within lipid metabolism; phospholipid metabolism. In terms of biological role, catalyzes the transfer of an acyl group from acyl-phosphate (acyl-PO(4)) to glycerol-3-phosphate (G3P) to form lysophosphatidic acid (LPA). This enzyme utilizes acyl-phosphate as fatty acyl donor, but not acyl-CoA or acyl-ACP. In Carboxydothermus hydrogenoformans (strain ATCC BAA-161 / DSM 6008 / Z-2901), this protein is Glycerol-3-phosphate acyltransferase.